A 655-amino-acid chain; its full sequence is Kelch-like protein 13 (655 aa).

Residues 92 to 161 (CDVTLMPGDT…IYTAKLSLNM (70 aa)) form the BTB domain. The 102-residue stretch at 196–297 (CVEVGRIANT…TPQELINYVQ (102 aa)) folds into the BACK domain. Kelch repeat units lie at residues 341 to 389 (HLVT…VIGN), 390 to 441 (FLYV…ALKG), 442 to 488 (YLYA…VYGG), 490 to 535 (MYIS…TVGE), 537 to 587 (LYVI…VFEN), and 588 to 636 (KIYV…TLTV).

Component of the BCR(KLHL9-KLHL13) E3 ubiquitin ligase complex, at least composed of CUL3, KLHL9, KLHL13 and RBX1. Interacts with AURKB.

It functions in the pathway protein modification; protein ubiquitination. Its function is as follows. Substrate-specific adapter of a BCR (BTB-CUL3-RBX1) E3 ubiquitin-protein ligase complex required for mitotic progression and cytokinesis. The BCR(KLHL9-KLHL13) E3 ubiquitin ligase complex mediates the ubiquitination of AURKB and controls the dynamic behavior of AURKB on mitotic chromosomes and thereby coordinates faithful mitotic progression and completion of cytokinesis. The polypeptide is Kelch-like protein 13 (KLHL13) (Homo sapiens (Human)).